We begin with the raw amino-acid sequence, 222 residues long: Alpha-S2-casein (222 aa).

A signal peptide spans 1 to 15; sequence MKFFIFTCLLAVALA. Phosphoserine is present on residues Ser-23, Ser-24, Ser-25, Ser-28, Ser-46, Ser-71, Ser-72, Ser-73, Ser-76, Ser-144, Ser-146, Ser-150, and Ser-158. A repeat spans 76-140; the sequence is SAEVATEEVK…AVPITPTLNR (65 aa). Positions 158-222 form a repeat; it reads STEVFTKKTK…TKVIPYVRYL (65 aa).

The protein belongs to the alpha-casein family. Mammary gland specific. Secreted in milk.

The protein resides in the secreted. Its function is as follows. Important role in the capacity of milk to transport calcium phosphate. In terms of biological role, casocidin-I inhibits the growth of E.coli and S.carnosus. In Bos taurus (Bovine), this protein is Alpha-S2-casein (CSN1S2).